The sequence spans 76 residues: NADH dehydrogenase [ubiquinone] 1 subunit C1, mitochondrial (76 aa).

The N-terminal 27 residues, 1–27 (MAPSALLRPFWKLLAPARFPSVSSSRS), are a transit peptide targeting the mitochondrion. Residues 41-59 (WLKVGLTLGTSVFLWIYLI) form a helical membrane-spanning segment.

The protein belongs to the complex I NDUFC1 subunit family. As to quaternary structure, complex I is composed of 45 different subunits.

It localises to the mitochondrion inner membrane. Functionally, accessory subunit of the mitochondrial membrane respiratory chain NADH dehydrogenase (Complex I), that is believed not to be involved in catalysis. Complex I functions in the transfer of electrons from NADH to the respiratory chain. The immediate electron acceptor for the enzyme is believed to be ubiquinone. The protein is NADH dehydrogenase [ubiquinone] 1 subunit C1, mitochondrial (NDUFC1) of Bos taurus (Bovine).